Reading from the N-terminus, the 366-residue chain is GTP cyclohydrolase 1 type 2 homolog (366 aa).

Histidine 64, histidine 65, aspartate 102, histidine 326, and glutamate 329 together coordinate a divalent metal cation.

The protein belongs to the GTP cyclohydrolase I type 2/NIF3 family. Homohexamer.

This Staphylococcus epidermidis (strain ATCC 12228 / FDA PCI 1200) protein is GTP cyclohydrolase 1 type 2 homolog.